Consider the following 237-residue polypeptide: tRNA1(Val) (adenine(37)-N6)-methyltransferase (237 aa).

It belongs to the methyltransferase superfamily. tRNA (adenine-N(6)-)-methyltransferase family.

The protein resides in the cytoplasm. It catalyses the reaction adenosine(37) in tRNA1(Val) + S-adenosyl-L-methionine = N(6)-methyladenosine(37) in tRNA1(Val) + S-adenosyl-L-homocysteine + H(+). Functionally, specifically methylates the adenine in position 37 of tRNA(1)(Val) (anticodon cmo5UAC). The sequence is that of tRNA1(Val) (adenine(37)-N6)-methyltransferase from Parabacteroides distasonis (strain ATCC 8503 / DSM 20701 / CIP 104284 / JCM 5825 / NCTC 11152).